A 152-amino-acid polypeptide reads, in one-letter code: UPF0178 protein Shewmr7_1635 (152 aa).

The protein belongs to the UPF0178 family.

This Shewanella sp. (strain MR-7) protein is UPF0178 protein Shewmr7_1635.